We begin with the raw amino-acid sequence, 211 residues long: Large ribosomal subunit protein eL13 (211 aa).

Lys16 carries the post-translational modification N6-acetyllysine. Ser77 and Ser106 each carry phosphoserine. Residues Lys123 and Lys145 each participate in a glycyl lysine isopeptide (Lys-Gly) (interchain with G-Cter in SUMO2) cross-link. A Glycyl lysine isopeptide (Lys-Gly) (interchain with G-Cter in SUMO1); alternate cross-link involves residue Lys174. Glycyl lysine isopeptide (Lys-Gly) (interchain with G-Cter in SUMO2); alternate cross-links involve residues Lys174 and Lys177. Residue Lys177 is modified to N6-acetyllysine; alternate.

The protein belongs to the eukaryotic ribosomal protein eL13 family. In terms of assembly, component of the 60S large ribosomal subunit (LSU).

The protein localises to the cytoplasm. Component of the ribosome, a large ribonucleoprotein complex responsible for the synthesis of proteins in the cell. The small ribosomal subunit (SSU) binds messenger RNAs (mRNAs) and translates the encoded message by selecting cognate aminoacyl-transfer RNA (tRNA) molecules. The large subunit (LSU) contains the ribosomal catalytic site termed the peptidyl transferase center (PTC), which catalyzes the formation of peptide bonds, thereby polymerizing the amino acids delivered by tRNAs into a polypeptide chain. The nascent polypeptides leave the ribosome through a tunnel in the LSU and interact with protein factors that function in enzymatic processing, targeting, and the membrane insertion of nascent chains at the exit of the ribosomal tunnel. As part of the LSU, it is probably required for its formation and the maturation of rRNAs. Plays a role in bone development. In Oryctolagus cuniculus (Rabbit), this protein is Large ribosomal subunit protein eL13 (RPL13).